Reading from the N-terminus, the 63-residue chain is Small ribosomal subunit protein eS17 (63 aa).

It belongs to the eukaryotic ribosomal protein eS17 family.

The polypeptide is Small ribosomal subunit protein eS17 (Methanococcus maripaludis (strain C6 / ATCC BAA-1332)).